The sequence spans 776 residues: Microtubule-associated protein tau (776 aa).

The segment covering 1-26 (MAEPRQEFEVMEDHAGTYGLGDRKDQ) has biased composition (basic and acidic residues). Disordered regions lie at residues 1–263 (MAEP…PAKG) and 276–591 (STEI…LKNV). Alanine 2 is modified (N-acetylalanine). Phosphotyrosine is present on residues tyrosine 18 and tyrosine 29. Residue lysine 44 forms a Glycyl lysine isopeptide (Lys-Gly) (interchain with G-Cter in ubiquitin) linkage. A phosphoserine mark is found at serine 46 and serine 61. Polar residues predominate over residues 61–71 (SETSDAKSTPT). A phosphothreonine mark is found at threonine 69, threonine 71, and threonine 111. Composition is skewed to basic and acidic residues over residues 179-189 (EGGRHAPELLK) and 207-216 (GGKERPGSKE). Serine 214 carries the post-translational modification Phosphoserine. A compositionally biased stretch (acidic residues) spans 217–228 (EVDEDRDVDESS). Over residues 314-323 (EQAHSEEHLG) the composition is skewed to basic and acidic residues. A compositionally biased stretch (low complexity) spans 324–340 (RAAFPGAPGEGPEARGP). Basic and acidic residues-rich tracts occupy residues 344–356 (EDTK…ESSE) and 381–393 (KSKD…DKKA). The segment covering 440–452 (KYVSSVTPRTGSS) has biased composition (polar residues). A compositionally biased stretch (basic and acidic residues) spans 455 to 466 (KEMKLKGADGKT). Threonine 470 is subject to Phosphothreonine. Position 472 is an omega-N-methylarginine (arginine 472). The residue at position 480 (lysine 480) is an N6,N6-dimethyllysine; alternate. Lysine 480 is subject to N6-acetyllysine; alternate. Phosphothreonine occurs at positions 486, 492, and 498. Phosphoserine is present on residues serine 502, serine 526, and serine 530. A compositionally biased stretch (basic and acidic residues) spans 517–528 (RSERGEPPKSGD). Over residues 529 to 549 (RSGYSSPGSPGTPGSRSRTPS) the composition is skewed to low complexity. Tyrosine 532 is modified (phosphotyrosine). Phosphoserine occurs at positions 533, 534, and 537. A phosphothreonine mark is found at threonine 540 and threonine 547. At serine 549 the chain carries Phosphoserine. A Phosphothreonine modification is found at threonine 552. Lysine 560 carries the N6-acetyllysine modification. Threonine 566 bears the Phosphothreonine mark. Residues serine 570 and serine 572 each carry the phosphoserine modification. Tau/MAP repeat units follow at residues 579-609 (QTAP…GGGK), 610-640 (VQII…GGGS), 641-671 (VQIV…GGGQ), and 672-703 (VEVK…GGGN). A Glycyl lysine isopeptide (Lys-Gly) (interchain with G-Cter in ubiquitin) cross-link involves residue lysine 589. Lysine 594 is modified (N6-acetyllysine; alternate). Residue lysine 594 is modified to N6-methyllysine; alternate. Lysine 594 is covalently cross-linked (Glycyl lysine isopeptide (Lys-Gly) (interchain with G-Cter in ubiquitin); alternate). Serine 597 is subject to Phosphoserine. Lysine 602 participates in a covalent cross-link: Glycyl lysine isopeptide (Lys-Gly) (interchain with G-Cter in ubiquitin). Position 616 is an N6-acetyllysine; alternate (lysine 616). Lysine 616 is covalently cross-linked (Glycyl lysine isopeptide (Lys-Gly) (interchain with G-Cter in ubiquitin); alternate). A phosphoserine mark is found at serine 620 and serine 624. Position 625 is an N6-acetyllysine (lysine 625). A Phosphoserine modification is found at serine 628. Lysine 633 is subject to N6-acetyllysine; alternate. Residue lysine 633 forms a Glycyl lysine isopeptide (Lys-Gly) (interchain with G-Cter in ubiquitin); alternate linkage. At serine 640 the chain carries Phosphoserine. Lysine 646 carries the N6,N6-dimethyllysine; alternate modification. 3 positions are modified to N6-acetyllysine; alternate: lysine 646, lysine 652, and lysine 656. Residues lysine 646, lysine 652, and lysine 656 each participate in a glycyl lysine isopeptide (Lys-Gly) (interchain with G-Cter in ubiquitin); alternate cross-link. At serine 659 the chain carries Phosphoserine. Residues lysine 666, lysine 678, and lysine 682 each carry the N6-acetyllysine; alternate modification. Residues lysine 666, lysine 678, and lysine 682 each participate in a glycyl lysine isopeptide (Lys-Gly) (interchain with G-Cter in ubiquitin); alternate cross-link. Arginine 684 carries the omega-N-methylarginine modification. Serine 687 bears the Phosphoserine mark. Lysine 688 participates in a covalent cross-link: Glycyl lysine isopeptide (Lys-Gly) (interchain with G-Cter in ubiquitin). Phosphoserine is present on serine 691. Lysine 704 carries the N6-acetyllysine; alternate modification. A Glycyl lysine isopeptide (Lys-Gly) (interchain with G-Cter in ubiquitin); alternate cross-link involves residue lysine 704. Lysine 710 is covalently cross-linked (Glycyl lysine isopeptide (Lys-Gly) (interchain with G-Cter in ubiquitin)). Lysine 720 is modified (N6-acetyllysine; alternate). Residue lysine 720 forms a Glycyl lysine isopeptide (Lys-Gly) (interchain with G-Cter in ubiquitin); alternate linkage. Tyrosine 729 carries the phosphotyrosine modification. 2 positions are modified to phosphoserine: serine 731 and serine 735. Positions 733-752 (VVSGDTSPRHLSNVSSTGSI) are disordered. Polar residues predominate over residues 736–751 (GDTSPRHLSNVSSTGS). At threonine 738 the chain carries Phosphothreonine. 4 positions are modified to phosphoserine: serine 739, serine 744, serine 751, and serine 757. Residue threonine 762 is modified to Phosphothreonine.

In terms of assembly, interacts with MARK1, MARK2, MARK3 and MARK4. Interacts with SQSTM1 when polyubiquitinated. Interacts with PSMC2 through SQSTM1. Interacts with FKBP4. Binds to CSNK1D. Interacts with SGK1. Interacts with EPM2A; the interaction dephosphorylates MAPT at Ser-396. Interacts with PIN1. Interacts with LRRK2. Interacts with LRP1, leading to endocytosis; this interaction is reduced in the presence of LRPAP1/RAP. In terms of processing, polyubiquitinated. Requires functional TRAF6 and may provoke SQSTM1-dependent degradation by the proteasome. Post-translationally, phosphorylation at various serine and threonine residues in S-P or T-P motifs by proline-directed protein kinases (PDPK1, CDK1, CDK5, GSK3, MAPK) (a few sites per protein in interphase, more in mitosis), and at serine residues in K-X-G-S motifs by MAP/microtubule affinity-regulating kinase (MARK1, MARK2, MARK3 or MARK4), causing detachment from microtubules, and their disassembly. Phosphorylation at Ser-597 by BRSK1 and BRSK2 in neurons affects ability to bind microtubules and plays a role in neuron polarization. Phosphorylation at Ser-214 by SGK1 mediates microtubule depolymerization and neurite formation in hippocampal neurons. Phosphorylated by PHK. Dephosphorylation at several serine and threonine residues by the serine/threonine phosphatase PPP5C.

Its subcellular location is the cytoplasm. It localises to the cytosol. It is found in the cell membrane. The protein resides in the cytoskeleton. The protein localises to the cell projection. Its subcellular location is the axon. It localises to the dendrite. Its function is as follows. Promotes microtubule assembly and stability, and might be involved in the establishment and maintenance of neuronal polarity. The C-terminus binds axonal microtubules while the N-terminus binds neural plasma membrane components, suggesting that tau functions as a linker protein between both. Axonal polarity is predetermined by tau localization (in the neuronal cell) in the domain of the cell body defined by the centrosome. The short isoforms allow plasticity of the cytoskeleton whereas the longer isoforms may preferentially play a role in its stabilization. This chain is Microtubule-associated protein tau (MAPT), found in Gorilla gorilla gorilla (Western lowland gorilla).